Here is a 131-residue protein sequence, read N- to C-terminus: Large ribosomal subunit protein bL17 (131 aa).

It belongs to the bacterial ribosomal protein bL17 family. In terms of assembly, part of the 50S ribosomal subunit. Contacts protein L32.

This chain is Large ribosomal subunit protein bL17, found in Nitrosospira multiformis (strain ATCC 25196 / NCIMB 11849 / C 71).